The sequence spans 154 residues: Heat shock protein beta-3 (154 aa).

The disordered stretch occupies residues 48–71 (ARGAGTPQALAEDSASTEKPPGEG). A sHSP domain is found at 57-154 (LAEDSASTEK…VEVKDSLGTK (98 aa)).

It belongs to the small heat shock protein (HSP20) family.

The protein resides in the cytoplasm. It localises to the nucleus. In terms of biological role, inhibitor of actin polymerization. The polypeptide is Heat shock protein beta-3 (Hspb3) (Mus musculus (Mouse)).